Consider the following 298-residue polypeptide: GTP-binding protein REM 1 (298 aa).

The segment at 1–73 (MTLNTEQEAK…DDWSSESSDS (73 aa)) is disordered. Residues 35 to 55 (TVPSTQSQHPRLGQSASLNPP) are compositionally biased toward polar residues. Ser51 is subject to Phosphoserine. The segment covering 63-73 (PDDWSSESSDS) has biased composition (low complexity). GTP is bound by residues 87 to 94 (GDPGVGKT) and 195 to 198 (NKAD). Residues 268-287 (ARRFLARLTARSARRRALKA) are calmodulin-binding.

This sequence belongs to the small GTPase superfamily. RGK family. In terms of assembly, in vitro, interacts with calmodulin in a calcium-dependent manner. As to expression, most highly expressed in the endothelial lining of the blood vessels in uterus and heart. Lower levels found in spleen, lymph node, kidney and testis. Also found in cells with secretory function such as the islets of Langerhans, lobule/duct epithelium in the breast, bile duct epithelium in the liver, surface epithelium in the endometrial glands of the uterus, colon mucosa and acinar cells in the pancreas and the prostate.

Functionally, promotes endothelial cell sprouting and actin cytoskeletal reorganization. May be involved in angiogenesis. May function in Ca(2+) signaling. This is GTP-binding protein REM 1 (REM1) from Homo sapiens (Human).